The chain runs to 496 residues: Aldehyde dehydrogenase 1A1 (496 aa).

N6-acetyllysine occurs at positions 86 and 123. Residues 162–165 (IPWN), 188–191 (KPAE), 221–222 (GP), and 241–242 (GS) contribute to the NAD(+) site. Lys-247 carries the post-translational modification N6-acetyllysine. Catalysis depends on Glu-264, which acts as the Proton acceptor. 264 to 266 (ELG) is a binding site for NAD(+). Cys-298 (nucleophile) is an active-site residue. Residues 331–496 (LAPEVNQGPQ…VTVKISQKNS (166 aa)) form a mediates interaction with PRMT3 region. Residue 344–348 (EQYNK) coordinates NAD(+). N6-acetyllysine occurs at positions 348 and 362. 395–397 (EIF) is an NAD(+) binding site. Lys-405 carries the post-translational modification N6-acetyllysine. Ser-408 is subject to Phosphoserine. N6-acetyllysine occurs at positions 414, 430, and 490.

This sequence belongs to the aldehyde dehydrogenase family. In terms of assembly, homotetramer. Interacts with PRMT3; the interaction is direct, inhibits ALDH1A1 aldehyde dehydrogenase activity and is independent of the methyltransferase activity of PRMT3. The N-terminus is blocked most probably by acetylation.

Its subcellular location is the cytoplasm. The protein resides in the cytosol. It is found in the cell projection. It localises to the axon. The enzyme catalyses an aldehyde + NAD(+) + H2O = a carboxylate + NADH + 2 H(+). The catalysed reaction is all-trans-retinal + NAD(+) + H2O = all-trans-retinoate + NADH + 2 H(+). It carries out the reaction 9-cis-retinal + NAD(+) + H2O = 9-cis-retinoate + NADH + 2 H(+). It catalyses the reaction 11-cis-retinal + NAD(+) + H2O = 11-cis-retinoate + NADH + 2 H(+). The enzyme catalyses 13-cis-retinal + NAD(+) + H2O = 13-cis-retinoate + NADH + 2 H(+). The catalysed reaction is (E)-4-hydroxynon-2-enal + NAD(+) + H2O = (E)-4-hydroxynon-2-enoate + NADH + 2 H(+). It carries out the reaction malonaldehyde + NAD(+) + H2O = 3-oxopropanoate + NADH + 2 H(+). It catalyses the reaction hexanal + NAD(+) + H2O = hexanoate + NADH + 2 H(+). The enzyme catalyses propanal + NAD(+) + H2O = propanoate + NADH + 2 H(+). The catalysed reaction is 3-deoxyglucosone + NAD(+) + H2O = 2-dehydro-3-deoxy-D-gluconate + NADH + 2 H(+). It carries out the reaction acetaldehyde + NAD(+) + H2O = acetate + NADH + 2 H(+). It catalyses the reaction benzaldehyde + NAD(+) + H2O = benzoate + NADH + 2 H(+). The enzyme catalyses 4-aminobutanal + NAD(+) + H2O = 4-aminobutanoate + NADH + 2 H(+). Its pathway is cofactor metabolism; retinol metabolism. In terms of biological role, cytosolic dehydrogenase that catalyzes the irreversible oxidation of a wide range of aldehydes to their corresponding carboxylic acid. Functions downstream of retinol dehydrogenases and catalyzes the oxidation of retinaldehyde into retinoic acid, the second step in the oxidation of retinol/vitamin A into retinoic acid. This pathway is crucial to control the levels of retinol and retinoic acid, two important molecules which excess can be teratogenic and cytotoxic. Also oxidizes aldehydes resulting from lipid peroxidation like (E)-4-hydroxynon-2-enal/HNE, malonaldehyde and hexanal that form protein adducts and are highly cytotoxic. By participating for instance to the clearance of (E)-4-hydroxynon-2-enal/HNE in the lens epithelium prevents the formation of HNE-protein adducts and lens opacification. Functions also downstream of fructosamine-3-kinase in the fructosamine degradation pathway by catalyzing the oxidation of 3-deoxyglucosone, the carbohydrate product of fructosamine 3-phosphate decomposition, which is itself a potent glycating agent that may react with lysine and arginine side-chains of proteins. Also has an aminobutyraldehyde dehydrogenase activity and is probably part of an alternative pathway for the biosynthesis of GABA/4-aminobutanoate in midbrain, thereby playing a role in GABAergic synaptic transmission. In Oryctolagus cuniculus (Rabbit), this protein is Aldehyde dehydrogenase 1A1.